The primary structure comprises 132 residues: MTMTDPIADMLTRLRNGNSAYHDEVVMPHSKLKANIAEILKREGYVSGYRTEQGEKGQNLVVELKYGPNRERSIAGLRRVSKPGLRVYAKSTNLPKVLGGLGIAIISTSGGLLTDRQAIKQGVGGEVLAYAW.

It belongs to the universal ribosomal protein uS8 family. In terms of assembly, part of the 30S ribosomal subunit. Contacts proteins S5 and S12.

Functionally, one of the primary rRNA binding proteins, it binds directly to 16S rRNA central domain where it helps coordinate assembly of the platform of the 30S subunit. The protein is Small ribosomal subunit protein uS8 of Saccharopolyspora erythraea (strain ATCC 11635 / DSM 40517 / JCM 4748 / NBRC 13426 / NCIMB 8594 / NRRL 2338).